The chain runs to 114 residues: DNA-directed RNA polymerase subunit omega (114 aa).

It belongs to the RNA polymerase subunit omega family. As to quaternary structure, the RNAP catalytic core consists of 2 alpha, 1 beta, 1 beta' and 1 omega subunit. When a sigma factor is associated with the core the holoenzyme is formed, which can initiate transcription.

It catalyses the reaction RNA(n) + a ribonucleoside 5'-triphosphate = RNA(n+1) + diphosphate. Its function is as follows. Promotes RNA polymerase assembly. Latches the N- and C-terminal regions of the beta' subunit thereby facilitating its interaction with the beta and alpha subunits. The protein is DNA-directed RNA polymerase subunit omega of Novosphingobium aromaticivorans (strain ATCC 700278 / DSM 12444 / CCUG 56034 / CIP 105152 / NBRC 16084 / F199).